The primary structure comprises 178 residues: Protein GrpE (178 aa).

Belongs to the GrpE family. In terms of assembly, homodimer.

The protein localises to the cytoplasm. Participates actively in the response to hyperosmotic and heat shock by preventing the aggregation of stress-denatured proteins, in association with DnaK and GrpE. It is the nucleotide exchange factor for DnaK and may function as a thermosensor. Unfolded proteins bind initially to DnaJ; upon interaction with the DnaJ-bound protein, DnaK hydrolyzes its bound ATP, resulting in the formation of a stable complex. GrpE releases ADP from DnaK; ATP binding to DnaK triggers the release of the substrate protein, thus completing the reaction cycle. Several rounds of ATP-dependent interactions between DnaJ, DnaK and GrpE are required for fully efficient folding. The sequence is that of Protein GrpE from Rickettsia akari (strain Hartford).